The following is a 176-amino-acid chain: Large ribosomal subunit protein uL5 (176 aa).

It belongs to the universal ribosomal protein uL5 family. In terms of assembly, part of the 50S ribosomal subunit; contacts the 5S rRNA and probably tRNA. Forms a bridge to the 30S subunit in the 70S ribosome.

Functionally, this is one of the proteins that bind and probably mediate the attachment of the 5S RNA into the large ribosomal subunit, where it forms part of the central protuberance. In the 70S ribosome it contacts protein S13 of the 30S subunit (bridge B1b), connecting the 2 subunits; this bridge is implicated in subunit movement. May contact the P site tRNA; the 5S rRNA and some of its associated proteins might help stabilize positioning of ribosome-bound tRNAs. This chain is Large ribosomal subunit protein uL5, found in Picrophilus torridus (strain ATCC 700027 / DSM 9790 / JCM 10055 / NBRC 100828 / KAW 2/3).